A 744-amino-acid polypeptide reads, in one-letter code: Palmitoyltransferase ZDHHC5-A (744 aa).

Residues 1-11 (MPSGSMSGGVS) show a composition bias toward gly residues. The interval 1–25 (MPSGSMSGGVSGPTSPPHPTVPSRP) is disordered. At 1 to 30 (MPSGSMSGGVSGPTSPPHPTVPSRPLRPSR) the chain is on the cytoplasmic side. Residues 31–51 (YVPVSAATAFLVGSTTLFFCF) traverse the membrane as a helical segment. Topologically, residues 52–61 (TCPWLSEQFS) are extracellular. A helical membrane pass occupies residues 62-82 (VAVPIYNGVMFMFVLANFCMA). Over 83 to 167 (TFMDPGIFPR…IGRRNYRYFF (85 aa)) the chain is Cytoplasmic. In terms of domain architecture, DHHC spans 121 to 171 (KWCSTCRFYRPPRCSHCSVCDNCVEDFDHHCPWVNNCIGRRNYRYFFLFLL). The S-palmitoyl cysteine intermediate role is filled by C151. A helical membrane pass occupies residues 168-188 (LFLLSLTAHIMGVFGFGLLFI). Over 189–208 (LYHTQQLDRVHSAVTMAVMC) the chain is Extracellular. The chain crosses the membrane as a helical span at residues 209–229 (VAGLFFIPVAGLTGFHVVLVA). Residues 230–744 (RGRTTNEQVT…VGGTTYEISV (515 aa)) are Cytoplasmic-facing. Disordered regions lie at residues 314–523 (SLEM…PVVG), 556–645 (QHAV…SLSY), and 664–744 (SVAG…EISV). The segment covering 369–393 (TYSSPGKNHTALTHAYANQSSQQPG) has biased composition (polar residues). Basic and acidic residues predominate over residues 398-413 (PSLDGREGGGAERSGA). Residues 415 to 428 (RTGGGPGGPPGSGI) show a composition bias toward gly residues. The span at 460–501 (THNAPPSEATTSTSYKSLANQTPPQAARNGSLSYDSLLTPSE) shows a compositional bias: polar residues. Residues 571-584 (PERERERLLHDSQA) are compositionally biased toward basic and acidic residues. The segment covering 585–601 (QHHHHHHHHHHHHRPPR) has biased composition (basic residues). Low complexity-rich tracts occupy residues 621–630 (RTRSTDTTHP) and 689–723 (PKPS…SPAH). The span at 725–737 (PGGGVKKVTGVGG) shows a compositional bias: gly residues.

Belongs to the DHHC palmitoyltransferase family. ERF2/ZDHHC9 subfamily.

The protein localises to the cell membrane. It catalyses the reaction L-cysteinyl-[protein] + hexadecanoyl-CoA = S-hexadecanoyl-L-cysteinyl-[protein] + CoA. In terms of biological role, palmitoyltransferase that catalyzes the addition of palmitate onto various protein substrates and is involved in a variety of cellular processes. In Danio rerio (Zebrafish), this protein is Palmitoyltransferase ZDHHC5-A.